A 381-amino-acid chain; its full sequence is Chymosin (381 aa).

The first 16 residues, 1-16 (MRCLVVLLAVFALSQG), serve as a signal peptide directing secretion. The propeptide at 17-58 (AEITRIPLYKGKPLRKALKERGLLEDFLQKQQYGVSSEYSGF) is activation peptide. The region spanning 74–378 (YFGKIYLGTP…DRANNLVGLA (305 aa)) is the Peptidase A1 domain. Aspartate 92 is a catalytic residue. Cystine bridges form between cysteine 105-cysteine 110 and cysteine 265-cysteine 269. Aspartate 274 is an active-site residue. An intrachain disulfide couples cysteine 308 to cysteine 341.

The protein belongs to the peptidase A1 family. As to quaternary structure, monomer.

It carries out the reaction Broad specificity similar to that of pepsin A. Clots milk by cleavage of a single 104-Ser-Phe-|-Met-Ala-107 bond in kappa-chain of casein.. In terms of biological role, chymosin is synthesized in the mucosa of the stomach. The enzyme hydrolyzes casein to paracasein. In Ovis aries (Sheep), this protein is Chymosin (CYM).